The following is a 210-amino-acid chain: MSDPTYYETMYILRPDIPEDEVEGHLKKYSEVLEKAKAKIIDNQMRGKRRLAYTIGKHKEGIYVQLSHTGNGKHVETLERSMRLSEDVIRYLTVKQYGPLPTKRNTKSQDKEASTTNNENDTKEVKEAKDTKEVKEAKDTKEVKEAKDTKEVKEAKDTKEVKEAKDTKEVKEAKDTKEVKEAKDTKEVKEAKDTKEVKEAKDTKEVKEEG.

The segment at 99 to 210 (PLPTKRNTKS…KDTKEVKEEG (112 aa)) is disordered. Residues 120–210 (NDTKEVKEAK…KDTKEVKEEG (91 aa)) show a composition bias toward basic and acidic residues.

This sequence belongs to the bacterial ribosomal protein bS6 family.

In terms of biological role, binds together with bS18 to 16S ribosomal RNA. The polypeptide is Small ribosomal subunit protein bS6 (Prochlorococcus marinus (strain SARG / CCMP1375 / SS120)).